A 277-amino-acid polypeptide reads, in one-letter code: Large ribosomal subunit protein uL2 (277 aa).

Residues 222–277 (GVAMNPVDHPHGGGEGRTSGGRHPVSPWGKPTKGKRTRSNKATDKFIMRTRHQRKK) form a disordered region.

It belongs to the universal ribosomal protein uL2 family. In terms of assembly, part of the 50S ribosomal subunit. Forms a bridge to the 30S subunit in the 70S ribosome.

Its function is as follows. One of the primary rRNA binding proteins. Required for association of the 30S and 50S subunits to form the 70S ribosome, for tRNA binding and peptide bond formation. It has been suggested to have peptidyltransferase activity; this is somewhat controversial. Makes several contacts with the 16S rRNA in the 70S ribosome. This is Large ribosomal subunit protein uL2 from Bartonella tribocorum (strain CIP 105476 / IBS 506).